The chain runs to 247 residues: 2-amino-5-formylamino-6-ribosylaminopyrimidin-4(3H)-one 5'-monophosphate deformylase (247 aa).

Residues glutamate 41, histidine 43, aspartate 52, and histidine 121 each coordinate Fe cation.

This sequence belongs to the creatininase superfamily. FAPy deformylase family. Homodimer. Fe(2+) serves as cofactor. Requires Zn(2+) as cofactor.

The enzyme catalyses 2-amino-5-formylamino-6-(5-phospho-D-ribosylamino)pyrimidin-4(3H)-one + H2O = 2,5-diamino-6-(1-D-ribosylamino)pyrimidin-4(3H)-one 5'-phosphate + formate + H(+). Its pathway is cofactor biosynthesis; coenzyme F420 biosynthesis. The protein operates within cofactor biosynthesis; riboflavin biosynthesis. Catalyzes the hydrolysis of the formamide of 2-amino-5-formylamino-6-ribosylamino-4(3H)-pyrimidinone 5'-monophosphate (FAPy) to form 2,5-diamino-6-ribosylamino-4(3H)-pyrimidinone 5'-phosphate (APy). This Methanothermus fervidus (strain ATCC 43054 / DSM 2088 / JCM 10308 / V24 S) protein is 2-amino-5-formylamino-6-ribosylaminopyrimidin-4(3H)-one 5'-monophosphate deformylase.